Here is a 419-residue protein sequence, read N- to C-terminus: Putative actin-fragmin kinase DDB_G0279609 (419 aa).

The segment at 73-94 (INNNNNSINNNNNNNNKNKNKN) is disordered.

Belongs to the protein kinase superfamily. AFK Ser/Thr protein kinase family.

The sequence is that of Putative actin-fragmin kinase DDB_G0279609 from Dictyostelium discoideum (Social amoeba).